The primary structure comprises 344 residues: AA9 family lytic polysaccharide monooxygenase J (344 aa).

Residues 1 to 20 (MKSSLLVVLTAGLAVRDAIA) form the signal peptide. Residues H21 and H99 each coordinate Cu(2+). The cysteines at positions 58 and 194 are disulfide-linked. H180 and Q189 together coordinate O2. Residue Y191 participates in Cu(2+) binding. The segment at 272-301 (PGGKPASGGSDGNAPEVAEPSGGEGSPSAP) is disordered. A compositionally biased stretch (low complexity) spans 285-301 (APEVAEPSGGEGSPSAP). Positions 304–341 (CEVAAYGQCGGDQYSGCTQCASGYTCKAVSPPYYSQCA) constitute a CBM1 domain.

Belongs to the polysaccharide monooxygenase AA9 family. The cofactor is Cu(2+).

It localises to the secreted. It catalyses the reaction [(1-&gt;4)-beta-D-glucosyl]n+m + reduced acceptor + O2 = 4-dehydro-beta-D-glucosyl-[(1-&gt;4)-beta-D-glucosyl]n-1 + [(1-&gt;4)-beta-D-glucosyl]m + acceptor + H2O.. Functionally, lytic polysaccharide monooxygenase (LPMO) that depolymerizes crystalline and amorphous polysaccharides via the oxidation of scissile alpha- or beta-(1-4)-glycosidic bonds, yielding C4 oxidation products. Catalysis by LPMOs requires the reduction of the active-site copper from Cu(II) to Cu(I) by a reducing agent and H(2)O(2) or O(2) as a cosubstrate. The chain is AA9 family lytic polysaccharide monooxygenase J (gh61-10) from Neurospora crassa (strain ATCC 24698 / 74-OR23-1A / CBS 708.71 / DSM 1257 / FGSC 987).